A 905-amino-acid polypeptide reads, in one-letter code: NADH-quinone oxidoreductase subunit G (905 aa).

Residues 1-83 (MATIHVDGKT…NTWISIEDEE (83 aa)) enclose the 2Fe-2S ferredoxin-type domain. Residues Cys34, Cys45, Cys48, and Cys67 each coordinate [2Fe-2S] cluster. The 4Fe-4S His(Cys)3-ligated-type domain maps to 83–122 (EAKQFRASVVEWLMTNHPHDCPVCEEGGHCHLQDMTVMTG). His99, Cys103, Cys106, Cys112, Cys151, Cys154, Cys157, Cys201, Cys228, Cys231, Cys235, and Cys263 together coordinate [4Fe-4S] cluster. Residues 221-277 (MQFAPSICHGCSSGCNISPGERYGEIRRIENRYNGSVNHYFLCDRGRFGYGYVNRED) enclose the 4Fe-4S Mo/W bis-MGD-type domain.

It belongs to the complex I 75 kDa subunit family. In terms of assembly, composed of 13 different subunits. Subunits NuoCD, E, F, and G constitute the peripheral sector of the complex. The cofactor is [2Fe-2S] cluster. [4Fe-4S] cluster is required as a cofactor.

It catalyses the reaction a quinone + NADH + 5 H(+)(in) = a quinol + NAD(+) + 4 H(+)(out). In terms of biological role, NDH-1 shuttles electrons from NADH, via FMN and iron-sulfur (Fe-S) centers, to quinones in the respiratory chain. The immediate electron acceptor for the enzyme in this species is believed to be ubiquinone. Couples the redox reaction to proton translocation (for every two electrons transferred, four hydrogen ions are translocated across the cytoplasmic membrane), and thus conserves the redox energy in a proton gradient. The sequence is that of NADH-quinone oxidoreductase subunit G (nuoG) from Pseudomonas aeruginosa (strain ATCC 15692 / DSM 22644 / CIP 104116 / JCM 14847 / LMG 12228 / 1C / PRS 101 / PAO1).